A 129-amino-acid polypeptide reads, in one-letter code: Small ribosomal subunit protein eS6 (129 aa).

The tract at residues 106–129 (QINASIVSRGEQSIDDLLGGEDDE) is disordered.

It belongs to the eukaryotic ribosomal protein eS6 family.

This Natronomonas pharaonis (strain ATCC 35678 / DSM 2160 / CIP 103997 / JCM 8858 / NBRC 14720 / NCIMB 2260 / Gabara) (Halobacterium pharaonis) protein is Small ribosomal subunit protein eS6.